A 204-amino-acid polypeptide reads, in one-letter code: Histone chaperone ASF1A (204 aa).

The interval 1-156 (MAKVQVNNVV…TRFHINWEDN (156 aa)) is interaction with histone H3, CHAF1B, and HIRA. The Required for interaction with HIRA motif lies at 31–37 (IEDLSED). The required for interaction with HIRA stretch occupies residues 155-204 (DNTEKLEDAESSNPNLQSLLSTDALPSASKGWSTSENSLNVMLESHMDCM). The residue at position 192 (serine 192) is a Phosphoserine.

The protein belongs to the ASF1 family. Interacts with histone H3 (via C-terminus), including histone H3.1, H3.2 and H3.3, and histone H4; the interaction with H3 is direct. Probably interacts with the heterodimeric form of H3-H4 taking the place of the second dimer. Interacts with the CHAF1A, CHAF1B and RBBP4 subunits of the CAF-1 complex. Interacts with CABIN1, HAT1, HIRA, NASP, TAF1 and UBN1. Found in a soluble complex with NASP and histones H3 and H4; the interaction with NASP is probably indirect and mediated by H3-H4. Interacts with CDAN1. Found in a cytosolic complex with IPO4 and histones H3 and H4. Interacts with CREBBP. Phosphorylated by TLK1 and TLK2. Highly phosphorylated in S-phase and at lower levels in M-phase. TLK2-mediated phosphorylation at Ser-192 prevents proteasome-dependent degradation. Phosphorylation at Ser-192 by PRKDC in response to DNA damage promotes the histone chaperone activity and ability to replace histones at double-strand breaks (DSBs) at stalled or collapsed replication forks, leading to RAD51 recruitment.

It is found in the nucleus. It localises to the chromosome. Functionally, histone chaperone that facilitates histone deposition and histone exchange and removal during nucleosome assembly and disassembly. Cooperates with chromatin assembly factor 1 (CAF-1) to promote replication-dependent chromatin assembly and with HIRA to promote replication-independent chromatin assembly. Promotes homologous recombination-mediated repair of double-strand breaks (DSBs) at stalled or collapsed replication forks: acts by mediating histone replacement at DSBs, leading to recruitment of the MMS22L-TONSL complex and subsequent loading of RAD51. Also involved in the nuclear import of the histone H3-H4 dimer together with importin-4 (IPO4): specifically recognizes and binds newly synthesized histones with the monomethylation of H3 'Lys-9' and acetylation at 'Lys-14' (H3K9me1K14ac) marks, and diacetylation at 'Lys-5' and 'Lys-12' of H4 (H4K5K12ac) marks in the cytosol. Required for the formation of senescence-associated heterochromatin foci (SAHF) and efficient senescence-associated cell cycle exit. The polypeptide is Histone chaperone ASF1A (Mus musculus (Mouse)).